Consider the following 233-residue polypeptide: Ion-translocating oxidoreductase complex subunit E (233 aa).

6 helical membrane passes run 18–38 (ALVQLLGLCPLLAVSSTATNA), 39–59 (LGLGLATTLVLVCTNTAVSAL), 69–89 (IPIYVMIIASVVSTVQMLINA), 92–112 (FGLYQSLGIFIPLIVTNCIVI), 128–148 (ALDGFAMGMGATCALFVLGAL), and 182–202 (PFLLAMLPPGAFIGLGLLLAG).

This sequence belongs to the NqrDE/RnfAE family. As to quaternary structure, the complex is composed of six subunits: RnfA, RnfB, RnfC, RnfD, RnfE and RnfG.

It is found in the cell inner membrane. In terms of biological role, part of a membrane-bound complex that couples electron transfer with translocation of ions across the membrane. The sequence is that of Ion-translocating oxidoreductase complex subunit E from Yersinia pestis bv. Antiqua (strain Angola).